We begin with the raw amino-acid sequence, 99 residues long: Nucleoid-associated protein SpyM3_1606 (99 aa).

It belongs to the YbaB/EbfC family. Homodimer.

The protein resides in the cytoplasm. It is found in the nucleoid. Functionally, binds to DNA and alters its conformation. May be involved in regulation of gene expression, nucleoid organization and DNA protection. The chain is Nucleoid-associated protein SpyM3_1606 from Streptococcus pyogenes serotype M3 (strain ATCC BAA-595 / MGAS315).